A 666-amino-acid chain; its full sequence is E3 ubiquitin-protein ligase MBR2 (666 aa).

Composition is skewed to polar residues over residues 1 to 14, 23 to 35, 42 to 58, and 73 to 88; these read MQGPRSTGDSSTGI, CSTNSETTSNNIL, FPNNTTGSGRPTYASSS, and SSSRLGPSDHLNSNGS. Disordered regions lie at residues 1 to 58, 73 to 95, 155 to 179, 221 to 329, 400 to 433, and 457 to 491; these read MQGP…ASSS, SSSRLGPSDHLNSNGSKTDRQLL, SLGSSSQTAEERSSGPGSSLGGLGS, SSLS…DGQP, NPSTSGDSPFVPRAGSSSGIHGLQPNPTWVTPHN, and GASLPLLPTGPSVSSNEAAAPSGSSSRSHRSRQRR. The segment covering 221-239 has biased composition (low complexity); the sequence is SSLSLSMPSQNSPNVNNQS. Composition is skewed to polar residues over residues 258–268, 286–303, and 414–433; these read AFPSTRSTETI, FSFTQSGSSVRQQQQLPA, and GSSSGIHGLQPNPTWVTPHN. The RING-type; atypical zinc finger occupies 619–660; sequence CCVCQEEYAEGDDLGTLGCGHEFHTACVKQWLMLKNLCPICK.

It belongs to the RING-type zinc finger family. As to quaternary structure, interacts with MED25 and UBC11.

The enzyme catalyses S-ubiquitinyl-[E2 ubiquitin-conjugating enzyme]-L-cysteine + [acceptor protein]-L-lysine = [E2 ubiquitin-conjugating enzyme]-L-cysteine + N(6)-ubiquitinyl-[acceptor protein]-L-lysine.. It participates in protein modification; protein ubiquitination. Its function is as follows. E3 ubiquitin-protein ligase that functions as a regulator of MED25 stability by targeting MED25 for degradation in a RING-H2-dependent way. Proteasome-dependent degradation of MED25 seems to activate its function as positive regulator of FLOWERING LOCUS T (FT) and is important to induce the expression of FT and consequently to promote flowering. May function downstream of HAL3 and be required for HAL3-regulated plant growth. Activation of MBR2 by HAL3 may lead to the degradation of cell cycle suppressors, resulting in enhancement of cell division and plant growth. The chain is E3 ubiquitin-protein ligase MBR2 (MBR2) from Arabidopsis thaliana (Mouse-ear cress).